A 93-amino-acid chain; its full sequence is Large ribosomal subunit protein bL31 (93 aa).

A disordered region spans residues 72–93 (VKTVSSNADNQKETTEELIKNK). Residues 81-93 (NQKETTEELIKNK) show a composition bias toward basic and acidic residues.

Belongs to the bacterial ribosomal protein bL31 family. Type A subfamily. In terms of assembly, part of the 50S ribosomal subunit.

Functionally, binds the 23S rRNA. In Onion yellows phytoplasma (strain OY-M), this protein is Large ribosomal subunit protein bL31.